The following is a 677-amino-acid chain: Sulfate transporter 2.1 (677 aa).

Residues 1–118 (MKERDSESFE…NYKLTMFKND (118 aa)) lie on the Cytoplasmic side of the membrane. The segment at 23–54 (STHMIQMAMANSGSSAAAQAGQDQPDRSKWLL) is disordered. Residues 28-44 (QMAMANSGSSAAAQAGQ) are compositionally biased toward low complexity. The helical transmembrane segment at 119–139 (LMAGLTLASLCIPQSIGYATL) threads the bilayer. Topologically, residues 140-141 (AK) are extracellular. A helical membrane pass occupies residues 142 to 162 (LDPQYGLYTSVVPPLIYALMG). Topologically, residues 163-166 (TSRE) are cytoplasmic. Residues 167-187 (IAIGPVAVVSLLISSMLQKLI) form a helical membrane-spanning segment. Topologically, residues 188–198 (DPETDPLGYKK) are extracellular. The chain crosses the membrane as a helical span at residues 199-219 (LVLTTTFFAGIFQASFGLFRL). The Cytoplasmic segment spans residues 220–221 (GF). A helical transmembrane segment spans residues 222 to 242 (LVDFLSHAAIVGFMGGAAIVI). Residues 243–278 (GLQQLKGLLGITNFTTNTDIVSVLRAVWRSCQQQWS) lie on the Extracellular side of the membrane. N255 carries N-linked (GlcNAc...) asparagine glycosylation. The chain crosses the membrane as a helical span at residues 279–299 (PHTFILGCSFLSFILITRFIG). The Cytoplasmic portion of the chain corresponds to 300-304 (KKYKK). Residues 305 to 325 (LFWLPAIAPLIAVVVSTLMVF) form a helical membrane-spanning segment. At 326–360 (LTKADEHGVKTVRHIKGGLNPMSIQDLDFNTPHLG) the chain is on the extracellular side. A helical transmembrane segment spans residues 361–381 (QIAKIGLIIAIVALTEAIAVG). Topologically, residues 382–397 (RSFAGIKGYRLDGNKE) are cytoplasmic. The chain crosses the membrane as a helical span at residues 398 to 418 (MVAIGFMNVLGSFTSCYAATG). Residues 419-426 (SFSRTAVN) are Extracellular-facing. The chain crosses the membrane as a helical span at residues 427 to 447 (FAAGCETAMSNIVMAVTVFVA). Topologically, residues 448–454 (LECLTRL) are cytoplasmic. Residues 455–475 (LYYTPIAILASIILSALPGLI) form a helical membrane-spanning segment. At 476–490 (NINEAIHIWKVDKFD) the chain is on the extracellular side. Residues 491–511 (FLALIGAFFGVLFASVEIGLL) form a helical membrane-spanning segment. The Cytoplasmic segment spans residues 512–677 (VAVVISFAKI…ALDACFGLKV (166 aa)). In terms of domain architecture, STAS spans 548 to 672 (YPMTVKTPGV…LTIGEALDAC (125 aa)).

This sequence belongs to the SLC26A/SulP transporter (TC 2.A.53) family. Expressed in root cap, central cylinder of roots and in vascular tissues of leaves.

The protein localises to the membrane. Low-affinity H(+)/sulfate cotransporter that may be involved in root-to-shoot translocation of sulfate. Plays a central role in the regulation of sulfate assimilation. The chain is Sulfate transporter 2.1 (SULTR2;1) from Arabidopsis thaliana (Mouse-ear cress).